The primary structure comprises 136 residues: Histone H3-like 3 (136 aa).

Residues 1 to 15 show a composition bias toward basic residues; sequence MARTKQTARKSHGGK. Residues 1–42 form a disordered region; sequence MARTKQTARKSHGGKAPRTLLATKAARKSAPTTGGVKKPHRY. N6,N6,N6-trimethyllysine; alternate is present on residues K5 and K10. N6,N6-dimethyllysine; alternate occurs at positions 5 and 10. 2 positions are modified to N6-methyllysine; alternate: K5 and K10. K10 carries the N6-acetyllysine; alternate modification. Residue S11 is modified to Phosphoserine. Position 15 is an N6-acetyllysine (K15). 2 positions are modified to N6-methyllysine; alternate: K24 and K28. K24 is modified (N6-acetyllysine; alternate). N6,N6,N6-trimethyllysine; alternate is present on K28. Residue K28 is modified to N6,N6-dimethyllysine; alternate. The residue at position 29 (S29) is a Phosphoserine. The residue at position 37 (K37) is an N6,N6,N6-trimethyllysine; alternate. K37 is modified (N6,N6-dimethyllysine; alternate). An N6-methyllysine; alternate modification is found at K37.

This sequence belongs to the histone H3 family. The nucleosome is a histone octamer containing two molecules each of H2A, H2B, H3 and H4 assembled in one H3-H4 heterotetramer and two H2A-H2B heterodimers. The octamer wraps approximately 147 bp of DNA. In terms of tissue distribution, expressed in roots, seedlings, leaves and open flowers.

It is found in the nucleus. It localises to the chromosome. Functionally, core component of nucleosome. Nucleosomes wrap and compact DNA into chromatin, limiting DNA accessibility to the cellular machineries which require DNA as a template. Histones thereby play a central role in transcription regulation, DNA repair, DNA replication and chromosomal stability. DNA accessibility is regulated via a complex set of post-translational modifications of histones, also called histone code, and nucleosome remodeling. In Arabidopsis thaliana (Mouse-ear cress), this protein is Histone H3-like 3.